The primary structure comprises 398 residues: Lipase member N (398 aa).

Residues 1–18 (MMWLLLTTTCLICGTLNA) form the signal peptide. The AB hydrolase-1 domain occupies 79–379 (PVVYMQHALF…DWNHFDFVWG (301 aa)). The active-site Nucleophile is S173. Residues C247 and C256 are joined by a disulfide bond. A glycan (N-linked (GlcNAc...) asparagine) is linked at N272. Catalysis depends on charge relay system residues D344 and H373.

It belongs to the AB hydrolase superfamily. Lipase family. Highly expressed in the epidermis in the granular keratinocytes. Also detected in other tissues, although at much lower levels, including lung and spleen.

The protein resides in the secreted. It catalyses the reaction a sterol ester + H2O = a sterol + a fatty acid + H(+). The enzyme catalyses a triacylglycerol + H2O = a 1,2-diacylglycerol + a fatty acid + H(+). It carries out the reaction a triacylglycerol + H2O = a diacylglycerol + a fatty acid + H(+). The catalysed reaction is a cholesterol ester + H2O = cholesterol + a fatty acid + H(+). Its function is as follows. Plays a highly specific role in the last step of keratinocyte differentiation. Contains two distinct domains: the alpha/beta hydrolase fold and the abhydrolase-associated lipase region, also features the consensus sequence of the active site of a genuine lipase. May have an essential function in lipid metabolism of the most differentiated epidermal layers. The polypeptide is Lipase member N (LIPN) (Homo sapiens (Human)).